Reading from the N-terminus, the 66-residue chain is Large ribosomal subunit protein bL33c (66 aa).

Belongs to the bacterial ribosomal protein bL33 family.

The protein localises to the plastid. It localises to the chloroplast. The sequence is that of Large ribosomal subunit protein bL33c from Vitis vinifera (Grape).